Here is a 367-residue protein sequence, read N- to C-terminus: TATA-box-binding protein-like (367 aa).

Residues 1-26 are disordered; the sequence is MKKQSKTHKVDYKYYNSGSKTSRNRN. Residues 16–26 show a composition bias toward polar residues; sequence NSGSKTSRNRN.

This sequence belongs to the TBP family.

The polypeptide is TATA-box-binding protein-like (Acanthamoeba polyphaga (Amoeba)).